We begin with the raw amino-acid sequence, 338 residues long: Phenylalanine--tRNA ligase alpha subunit (338 aa).

A Mg(2+)-binding site is contributed by glutamate 253.

Belongs to the class-II aminoacyl-tRNA synthetase family. Phe-tRNA synthetase alpha subunit type 1 subfamily. In terms of assembly, tetramer of two alpha and two beta subunits. Requires Mg(2+) as cofactor.

It is found in the cytoplasm. The enzyme catalyses tRNA(Phe) + L-phenylalanine + ATP = L-phenylalanyl-tRNA(Phe) + AMP + diphosphate + H(+). The protein is Phenylalanine--tRNA ligase alpha subunit of Legionella pneumophila (strain Lens).